We begin with the raw amino-acid sequence, 101 residues long: Urease subunit beta (101 aa).

It belongs to the urease beta subunit family. In terms of assembly, heterotrimer of UreA (gamma), UreB (beta) and UreC (alpha) subunits. Three heterotrimers associate to form the active enzyme.

The protein localises to the cytoplasm. It carries out the reaction urea + 2 H2O + H(+) = hydrogencarbonate + 2 NH4(+). It functions in the pathway nitrogen metabolism; urea degradation; CO(2) and NH(3) from urea (urease route): step 1/1. This chain is Urease subunit beta, found in Acaryochloris marina (strain MBIC 11017).